The chain runs to 149 residues: MPLPPDITFDSLALIKMHSQSMKKILEITLAKFTVNLSIVTVYRYLTVRAYLKKNIELELDVLKDIYNIVPLNEEIAIKAAQIEADLMRKGMMPDIEDVLTAATAIYTKSLLITDDSKRYEPMRRFGLDTMPLDKFVKEVELMVEKELI.

One can recognise a PINc domain in the interval 8 to 122 (TFDSLALIKM…ITDDSKRYEP (115 aa)). 2 residues coordinate Mg(2+): aspartate 10 and aspartate 98.

It belongs to the PINc/VapC protein family. Mg(2+) serves as cofactor.

In terms of biological role, toxic component of a type II toxin-antitoxin (TA) system. An RNase. This Pyrococcus furiosus (strain ATCC 43587 / DSM 3638 / JCM 8422 / Vc1) protein is VapC ribonuclease PF0355.